The sequence spans 1070 residues: DNA-directed RNA polymerase subunit beta (1070 aa).

This sequence belongs to the RNA polymerase beta chain family. As to quaternary structure, in plastids the minimal PEP RNA polymerase catalytic core is composed of four subunits: alpha, beta, beta', and beta''. When a (nuclear-encoded) sigma factor is associated with the core the holoenzyme is formed, which can initiate transcription.

The protein resides in the plastid. It is found in the chloroplast. It carries out the reaction RNA(n) + a ribonucleoside 5'-triphosphate = RNA(n+1) + diphosphate. Its function is as follows. DNA-dependent RNA polymerase catalyzes the transcription of DNA into RNA using the four ribonucleoside triphosphates as substrates. This is DNA-directed RNA polymerase subunit beta from Silene latifolia (White campion).